The primary structure comprises 475 residues: Glutamyl-tRNA(Gln) amidotransferase subunit A (475 aa).

Catalysis depends on charge relay system residues K66 and S141. The active-site Acyl-ester intermediate is S165.

This sequence belongs to the amidase family. GatA subfamily. Heterotrimer of A, B and C subunits.

It carries out the reaction L-glutamyl-tRNA(Gln) + L-glutamine + ATP + H2O = L-glutaminyl-tRNA(Gln) + L-glutamate + ADP + phosphate + H(+). Functionally, allows the formation of correctly charged Gln-tRNA(Gln) through the transamidation of misacylated Glu-tRNA(Gln) in organisms which lack glutaminyl-tRNA synthetase. The reaction takes place in the presence of glutamine and ATP through an activated gamma-phospho-Glu-tRNA(Gln). The sequence is that of Glutamyl-tRNA(Gln) amidotransferase subunit A (gatA) from Thermotoga maritima (strain ATCC 43589 / DSM 3109 / JCM 10099 / NBRC 100826 / MSB8).